The sequence spans 401 residues: Probable tRNA sulfurtransferase (401 aa).

The region spanning 60–165 (EEICSLLKNI…EEATFLTIRN (106 aa)) is the THUMP domain. ATP-binding positions include 183–184 (ML), 208–209 (HF), arginine 265, glycine 287, and glutamine 296.

It belongs to the ThiI family.

The protein localises to the cytoplasm. It catalyses the reaction [ThiI sulfur-carrier protein]-S-sulfanyl-L-cysteine + a uridine in tRNA + 2 reduced [2Fe-2S]-[ferredoxin] + ATP + H(+) = [ThiI sulfur-carrier protein]-L-cysteine + a 4-thiouridine in tRNA + 2 oxidized [2Fe-2S]-[ferredoxin] + AMP + diphosphate. The catalysed reaction is [ThiS sulfur-carrier protein]-C-terminal Gly-Gly-AMP + S-sulfanyl-L-cysteinyl-[cysteine desulfurase] + AH2 = [ThiS sulfur-carrier protein]-C-terminal-Gly-aminoethanethioate + L-cysteinyl-[cysteine desulfurase] + A + AMP + 2 H(+). The protein operates within cofactor biosynthesis; thiamine diphosphate biosynthesis. In terms of biological role, catalyzes the ATP-dependent transfer of a sulfur to tRNA to produce 4-thiouridine in position 8 of tRNAs, which functions as a near-UV photosensor. Also catalyzes the transfer of sulfur to the sulfur carrier protein ThiS, forming ThiS-thiocarboxylate. This is a step in the synthesis of thiazole, in the thiamine biosynthesis pathway. The sulfur is donated as persulfide by IscS. This chain is Probable tRNA sulfurtransferase, found in Bacillus velezensis (strain DSM 23117 / BGSC 10A6 / LMG 26770 / FZB42) (Bacillus amyloliquefaciens subsp. plantarum).